The following is a 1275-amino-acid chain: uncharacterized protein (1275 aa).

This is an uncharacterized protein from Homo sapiens (Human).